Here is a 485-residue protein sequence, read N- to C-terminus: Cobyric acid synthase (485 aa).

The GATase cobBQ-type domain occupies 249–437; sequence HLKIRVPVWQ…WHGLFSQPSA (189 aa). Cysteine 330 (nucleophile) is an active-site residue. Histidine 429 is an active-site residue.

Belongs to the CobB/CobQ family. CobQ subfamily.

Its pathway is cofactor biosynthesis; adenosylcobalamin biosynthesis. Functionally, catalyzes amidations at positions B, D, E, and G on adenosylcobyrinic A,C-diamide. NH(2) groups are provided by glutamine, and one molecule of ATP is hydrogenolyzed for each amidation. The chain is Cobyric acid synthase from Saccharophagus degradans (strain 2-40 / ATCC 43961 / DSM 17024).